The primary structure comprises 79 residues: Cell division topological specificity factor (79 aa).

Belongs to the MinE family.

Its function is as follows. Prevents the cell division inhibition by proteins MinC and MinD at internal division sites while permitting inhibition at polar sites. This ensures cell division at the proper site by restricting the formation of a division septum at the midpoint of the long axis of the cell. In Nitratiruptor sp. (strain SB155-2), this protein is Cell division topological specificity factor.